A 60-amino-acid chain; its full sequence is Large ribosomal subunit protein bL32 (60 aa).

This sequence belongs to the bacterial ribosomal protein bL32 family.

The polypeptide is Large ribosomal subunit protein bL32 (Azotobacter vinelandii (strain DJ / ATCC BAA-1303)).